We begin with the raw amino-acid sequence, 157 residues long: Rieske domain-containing protein (157 aa).

An N-acetylmethionine modification is found at Met1. Phosphoserine is present on Ser6. Rieske domains lie at 16–127 (TSVC…VDNG) and 17–131 (SVCV…NIYV). [2Fe-2S] cluster contacts are provided by Cys57, His59, Cys80, and His83.

The cofactor is [2Fe-2S] cluster.

This Mus musculus (Mouse) protein is Rieske domain-containing protein (Rfesd).